Consider the following 819-residue polypeptide: Probable phosphoenolpyruvate synthase (819 aa).

Residue His441 is the Tele-phosphohistidine intermediate of the active site. Arg540, Arg587, Glu684, Gly706, Thr707, Asn708, and Asp709 together coordinate substrate. Glu684 is a Mg(2+) binding site. Asp709 provides a ligand contact to Mg(2+). Cys756 functions as the Proton donor in the catalytic mechanism.

Belongs to the PEP-utilizing enzyme family. It depends on Mg(2+) as a cofactor.

It catalyses the reaction pyruvate + ATP + H2O = phosphoenolpyruvate + AMP + phosphate + 2 H(+). It functions in the pathway carbohydrate biosynthesis; gluconeogenesis. Functionally, catalyzes the phosphorylation of pyruvate to phosphoenolpyruvate. The sequence is that of Probable phosphoenolpyruvate synthase (ppsA) from Pyrococcus abyssi (strain GE5 / Orsay).